A 665-amino-acid chain; its full sequence is DNA ligase (665 aa).

Residues D32–D36, S81–L82, and E110 contribute to the NAD(+) site. Residue K112 is the N6-AMP-lysine intermediate of the active site. NAD(+) is bound by residues R133, E167, K283, and K307. Zn(2+) is bound by residues C401, C404, C419, and C424. Positions E586–I665 constitute a BRCT domain.

It belongs to the NAD-dependent DNA ligase family. LigA subfamily. Requires Mg(2+) as cofactor. It depends on Mn(2+) as a cofactor.

The enzyme catalyses NAD(+) + (deoxyribonucleotide)n-3'-hydroxyl + 5'-phospho-(deoxyribonucleotide)m = (deoxyribonucleotide)n+m + AMP + beta-nicotinamide D-nucleotide.. Its function is as follows. DNA ligase that catalyzes the formation of phosphodiester linkages between 5'-phosphoryl and 3'-hydroxyl groups in double-stranded DNA using NAD as a coenzyme and as the energy source for the reaction. It is essential for DNA replication and repair of damaged DNA. The polypeptide is DNA ligase (Staphylococcus epidermidis (strain ATCC 35984 / DSM 28319 / BCRC 17069 / CCUG 31568 / BM 3577 / RP62A)).